A 356-amino-acid chain; its full sequence is Probable butyrate kinase (356 aa).

The protein belongs to the acetokinase family.

The protein resides in the cytoplasm. The catalysed reaction is butanoate + ATP = butanoyl phosphate + ADP. This is Probable butyrate kinase from Coprothermobacter proteolyticus (strain ATCC 35245 / DSM 5265 / OCM 4 / BT).